The following is an 88-amino-acid chain: uncharacterized protein (88 aa).

Positions 1 to 23 (MAVSGLRLTIVWGLLVLILTCQA) are cleaved as a signal peptide. Over residues 25–40 (DKPEGKPDEQPHDSGK) the composition is skewed to basic and acidic residues. The interval 25-45 (DKPEGKPDEQPHDSGKNSEPA) is disordered.

It localises to the secreted. This is an uncharacterized protein from Bos taurus (Bovine).